We begin with the raw amino-acid sequence, 243 residues long: Glucosamine-6-phosphate deaminase (243 aa).

Asp67 (proton acceptor; for enolization step) is an active-site residue. The active-site For ring-opening step is the Asn137. His139 acts as the Proton acceptor; for ring-opening step in catalysis. The active-site For ring-opening step is the Glu144.

Belongs to the glucosamine/galactosamine-6-phosphate isomerase family. NagB subfamily.

The enzyme catalyses alpha-D-glucosamine 6-phosphate + H2O = beta-D-fructose 6-phosphate + NH4(+). The protein operates within amino-sugar metabolism; N-acetylneuraminate degradation; D-fructose 6-phosphate from N-acetylneuraminate: step 5/5. Its function is as follows. Catalyzes the reversible isomerization-deamination of glucosamine 6-phosphate (GlcN6P) to form fructose 6-phosphate (Fru6P) and ammonium ion. This chain is Glucosamine-6-phosphate deaminase, found in Staphylococcus epidermidis (strain ATCC 35984 / DSM 28319 / BCRC 17069 / CCUG 31568 / BM 3577 / RP62A).